We begin with the raw amino-acid sequence, 309 residues long: ATP synthase gamma chain (309 aa).

The protein belongs to the ATPase gamma chain family. F-type ATPases have 2 components, CF(1) - the catalytic core - and CF(0) - the membrane proton channel. CF(1) has five subunits: alpha(3), beta(3), gamma(1), delta(1), epsilon(1). CF(0) has three main subunits: a, b and c.

The protein localises to the cell membrane. Its function is as follows. Produces ATP from ADP in the presence of a proton gradient across the membrane. The gamma chain is believed to be important in regulating ATPase activity and the flow of protons through the CF(0) complex. The polypeptide is ATP synthase gamma chain (Mycobacterium sp. (strain JLS)).